A 637-amino-acid chain; its full sequence is Probable serine/threonine-protein kinase DDB_G0283065 (637 aa).

Disordered regions lie at residues N36 to R88 and N155 to N234. Positions N53–K85 are enriched in low complexity. The 394-residue stretch at F236 to F629 folds into the Protein kinase domain. ATP-binding positions include L242–V250 and K265. The Proton acceptor role is filled by D479.

This sequence belongs to the protein kinase superfamily. Ser/Thr protein kinase family. GCN2 subfamily.

It carries out the reaction L-seryl-[protein] + ATP = O-phospho-L-seryl-[protein] + ADP + H(+). The enzyme catalyses L-threonyl-[protein] + ATP = O-phospho-L-threonyl-[protein] + ADP + H(+). This Dictyostelium discoideum (Social amoeba) protein is Probable serine/threonine-protein kinase DDB_G0283065.